Here is a 161-residue protein sequence, read N- to C-terminus: Cyclic pyranopterin monophosphate synthase (161 aa).

Substrate-binding positions include 75–77 and 113–114; these read LCH and ME. Asp-128 is an active-site residue.

This sequence belongs to the MoaC family. Homohexamer; trimer of dimers.

The enzyme catalyses (8S)-3',8-cyclo-7,8-dihydroguanosine 5'-triphosphate = cyclic pyranopterin phosphate + diphosphate. Its pathway is cofactor biosynthesis; molybdopterin biosynthesis. In terms of biological role, catalyzes the conversion of (8S)-3',8-cyclo-7,8-dihydroguanosine 5'-triphosphate to cyclic pyranopterin monophosphate (cPMP). This chain is Cyclic pyranopterin monophosphate synthase, found in Enterobacter sp. (strain 638).